A 644-amino-acid polypeptide reads, in one-letter code: Pesticidal crystal protein Cry3Aa (644 aa).

The span at Met-1–Lys-13 shows a compositional bias: basic and acidic residues. The tract at residues Met-1–Val-20 is disordered. Positions Met-1 to Leu-57 are cleaved as a propeptide — removed in mature form.

This sequence belongs to the delta endotoxin family.

Promotes colloidosmotic lysis by binding to the midgut epithelial cells of Coleoptera. This Bacillus thuringiensis subsp. san diego protein is Pesticidal crystal protein Cry3Aa (cry3Aa).